The primary structure comprises 208 residues: Uracil phosphoribosyltransferase (208 aa).

Residues arginine 78, arginine 103, and 130 to 138 contribute to the 5-phospho-alpha-D-ribose 1-diphosphate site; that span reads DPMFATGGT. Uracil contacts are provided by residues isoleucine 193 and 198 to 200; that span reads GDA. Aspartate 199 contacts 5-phospho-alpha-D-ribose 1-diphosphate.

Belongs to the UPRTase family. It depends on Mg(2+) as a cofactor.

The catalysed reaction is UMP + diphosphate = 5-phospho-alpha-D-ribose 1-diphosphate + uracil. Its pathway is pyrimidine metabolism; UMP biosynthesis via salvage pathway; UMP from uracil: step 1/1. With respect to regulation, allosterically activated by GTP. In terms of biological role, catalyzes the conversion of uracil and 5-phospho-alpha-D-ribose 1-diphosphate (PRPP) to UMP and diphosphate. The polypeptide is Uracil phosphoribosyltransferase (Campylobacter jejuni (strain RM1221)).